The sequence spans 237 residues: Ribonuclease PH (237 aa).

Residues R86 and 124–126 (GTR) each bind phosphate.

This sequence belongs to the RNase PH family. In terms of assembly, homohexameric ring arranged as a trimer of dimers.

The catalysed reaction is tRNA(n+1) + phosphate = tRNA(n) + a ribonucleoside 5'-diphosphate. In terms of biological role, phosphorolytic 3'-5' exoribonuclease that plays an important role in tRNA 3'-end maturation. Removes nucleotide residues following the 3'-CCA terminus of tRNAs; can also add nucleotides to the ends of RNA molecules by using nucleoside diphosphates as substrates, but this may not be physiologically important. Probably plays a role in initiation of 16S rRNA degradation (leading to ribosome degradation) during starvation. This is Ribonuclease PH from Methylorubrum populi (strain ATCC BAA-705 / NCIMB 13946 / BJ001) (Methylobacterium populi).